We begin with the raw amino-acid sequence, 110 residues long: Large ribosomal subunit protein uL22 (110 aa).

The protein belongs to the universal ribosomal protein uL22 family. In terms of assembly, part of the 50S ribosomal subunit.

In terms of biological role, this protein binds specifically to 23S rRNA; its binding is stimulated by other ribosomal proteins, e.g. L4, L17, and L20. It is important during the early stages of 50S assembly. It makes multiple contacts with different domains of the 23S rRNA in the assembled 50S subunit and ribosome. Functionally, the globular domain of the protein is located near the polypeptide exit tunnel on the outside of the subunit, while an extended beta-hairpin is found that lines the wall of the exit tunnel in the center of the 70S ribosome. The protein is Large ribosomal subunit protein uL22 of Histophilus somni (strain 2336) (Haemophilus somnus).